The primary structure comprises 440 residues: MLITNPALLGILASLVPLALGAPNQPIQARSRKCVIPSSYASSHGTADDSPAVASAFAQCAENSVIVFQEGVDYNIFHPIKATNLSNVEIRVLGNLHLPQDITAVQNIVKSGQSTWFTFQGPRVDWTGADDIKNGWINSYGQAWWDANPANSSSFPNRPHLMSYKTSQASIKNFRSRKPIAWNVKLQGDDITVSHAIVDATSTGGFPFNTDGFDVEGTNISITDSVMFNGDDAIAVNTPSHNIVFARNTIGYQSHGMSIGSLGKDPTDFANITNLRFEDVTVIDALYAARFKSWSGGRGLVKNVVWKNIRTFNVTFPIFVTQSYSDQSASRPGTIDPFSSVMMEDFTWSDFSGTINTYHPGDGSCVTDPCWYNVGLPNLKHTEAIVLECNTESSCKNFRTEGIRLHPQSKDSPSVICMKATAELNPKLGFECKNGTFVPH.

Positions 1-21 (MLITNPALLGILASLVPLALG) are cleaved as a signal peptide. N-linked (GlcNAc...) asparagine glycosylation is found at Asn84 and Asn151. 3 PbH1 repeats span residues 188–210 (GDDI…PFNT), 217–238 (GTNI…AVNT), and 240–261 (SHNI…SIGS). Asn219 carries an N-linked (GlcNAc...) asparagine glycan. Catalysis depends on Asp231, which acts as the Proton donor. His255 is a catalytic residue. Asn271 carries N-linked (GlcNAc...) asparagine glycosylation. One copy of the PbH1 4 repeat lies at 272-293 (ITNLRFEDVTVIDALYAARFKS). N-linked (GlcNAc...) asparagine glycosylation occurs at Asn313. A disulfide bond links Cys389 and Cys395. N-linked (GlcNAc...) asparagine glycosylation occurs at Asn434.

This sequence belongs to the glycosyl hydrolase 28 family.

It is found in the secreted. It carries out the reaction [(1-&gt;4)-alpha-D-galacturonosyl](n) + H2O = alpha-D-galacturonate + [(1-&gt;4)-alpha-D-galacturonosyl](n-1). Functionally, specific in hydrolyzing the terminal glycosidic bond of polygalacturonic acid and oligogalacturonates. The polypeptide is Probable exopolygalacturonase C (pgxC) (Aspergillus fumigatus (strain CBS 144.89 / FGSC A1163 / CEA10) (Neosartorya fumigata)).